Here is a 513-residue protein sequence, read N- to C-terminus: 2,3-bisphosphoglycerate-independent phosphoglycerate mutase (513 aa).

Residues aspartate 13 and serine 63 each coordinate Mn(2+). Serine 63 functions as the Phosphoserine intermediate in the catalytic mechanism. Substrate-binding positions include histidine 124, 154–155, arginine 186, arginine 192, 262–265, and lysine 335; these read RD and RADR. Positions 402, 406, 443, 444, and 462 each coordinate Mn(2+).

It belongs to the BPG-independent phosphoglycerate mutase family. As to quaternary structure, monomer. The cofactor is Mn(2+).

It catalyses the reaction (2R)-2-phosphoglycerate = (2R)-3-phosphoglycerate. Its pathway is carbohydrate degradation; glycolysis; pyruvate from D-glyceraldehyde 3-phosphate: step 3/5. In terms of biological role, catalyzes the interconversion of 2-phosphoglycerate and 3-phosphoglycerate. This Photobacterium profundum (strain SS9) protein is 2,3-bisphosphoglycerate-independent phosphoglycerate mutase.